Reading from the N-terminus, the 206-residue chain is Large ribosomal subunit protein uL3 (206 aa).

Residues 122–154 form a disordered region; that stretch reads VVKRHGHAGGPGGHGSRFHRHPGSMGANSTPSR.

The protein belongs to the universal ribosomal protein uL3 family. Part of the 50S ribosomal subunit. Forms a cluster with proteins L14 and L19.

One of the primary rRNA binding proteins, it binds directly near the 3'-end of the 23S rRNA, where it nucleates assembly of the 50S subunit. This Leptospira borgpetersenii serovar Hardjo-bovis (strain JB197) protein is Large ribosomal subunit protein uL3.